Consider the following 443-residue polypeptide: Crh-like protein 2 (443 aa).

A signal peptide spans Met1 to Ala20. Residues Ala21–Gly306 form the GH16 domain. Cys56 and Cys67 form a disulfide bridge. The active-site Nucleophile is Glu164. Glu168 serves as the catalytic Proton donor. Glu168 is a chitin binding site. N-linked (GlcNAc...) asparagine glycosylation is found at Asn194 and Asn237. Trp257 and Thr268 together coordinate chitin. Asn332 and Asn359 each carry an N-linked (GlcNAc...) asparagine glycan. 2 stretches are compositionally biased toward low complexity: residues Ala350–Thr367 and Glu378–Ser410. The interval Ala350–Ser420 is disordered. Over residues Ala411–Ser420 the composition is skewed to polar residues. Residue Asn416 is the site of GPI-like-anchor amidated asparagine attachment. Residues Ala417 to Leu443 constitute a propeptide, removed in mature form. The N-linked (GlcNAc...) asparagine glycan is linked to Asn427.

This sequence belongs to the glycosyl hydrolase 16 family. CRH1 subfamily. In terms of processing, the GPI-like anchor contains a phosphoceramide lipid group. The anchor position has not been determined.

It is found in the cell membrane. It localises to the secreted. Its subcellular location is the cell wall. It carries out the reaction Random endo-hydrolysis of N-acetyl-beta-D-glucosaminide (1-&gt;4)-beta-linkages in chitin and chitodextrins.. Functionally, dual chitinase/transglycosylase that plays a role in cell wall architecture. Chitinase and transglycosylase activities are coupled. Required for the polysaccharide cross-linking at the septa and the cell wall. More specifically, transfers chitin to 1,6-beta-glucan in the cell wall. In Aspergillus fumigatus (strain ATCC MYA-4609 / CBS 101355 / FGSC A1100 / Af293) (Neosartorya fumigata), this protein is Crh-like protein 2.